The following is a 582-amino-acid chain: Probable DNA ligase (582 aa).

Glutamate 248 contacts ATP. Catalysis depends on lysine 250, which acts as the N6-AMP-lysine intermediate. The ATP site is built by arginine 255, arginine 270, glutamate 299, phenylalanine 339, arginine 416, and lysine 422.

It belongs to the ATP-dependent DNA ligase family. It depends on Mg(2+) as a cofactor.

The enzyme catalyses ATP + (deoxyribonucleotide)n-3'-hydroxyl + 5'-phospho-(deoxyribonucleotide)m = (deoxyribonucleotide)n+m + AMP + diphosphate.. Functionally, DNA ligase that seals nicks in double-stranded DNA during DNA replication, DNA recombination and DNA repair. The chain is Probable DNA ligase from Persephonella marina (strain DSM 14350 / EX-H1).